Consider the following 1275-residue polypeptide: Inner capsid protein lambda-1 (1275 aa).

The span at 1 to 12 (MKRIPRKTKGKS) shows a compositional bias: basic residues. The segment at 1–149 (MKRIPRKTKG…DNEGGSNQKP (149 aa)) is disordered. 2 stretches are compositionally biased toward basic and acidic residues: residues 18 to 35 (DSTERSDDGSSQLRDKQN) and 75 to 117 (NNDE…DKSK). Residues 118–149 (AQVTYSDTGINNANELSRSGNVDNEGGSNQKP) are compositionally biased toward polar residues. The C2H2-type zinc finger occupies 181-203 (YQCHVCSAVLFSPLDLDAHVASH).

Belongs to the turreted BTV-fold inner capsid family. In terms of assembly, homodecamer; each decamer is made up of two conformers of VP2, called VP2A and VP2B. 12 homodecamers assemble to form an icosahedral capsid. Interacts with protein mu-NS; in viral inclusions. It depends on Mg(2+) as a cofactor. Mn(2+) is required as a cofactor.

Its subcellular location is the virion. It carries out the reaction ATP + H2O = ADP + phosphate + H(+). Inner capsid protein that self-assembles to form an icosahedral capsid with a T=2 symmetry, which consists of 120 copies of VP2, with channels at each of its five-fold vertices. This capsid constitutes the innermost concentric layer of the viral mature particle. Its function is as follows. Displays NTPase, RNA 5'-triphosphatase (RTPase) and RNA helicase activities and probably participates in transcription of the viral genome. Helicase activity might be involved in unwinding or reannealing dsRNA during RNA synthesis. RTPase enzymatic activity represents the first step in RNA capping, which yields a 5'-diphosphorylated plus-strand RNA. The protein is Inner capsid protein lambda-1 (L3) of Reovirus type 1 (strain Lang) (T1L).